The sequence spans 101 residues: Small ribosomal subunit protein uS14 (101 aa).

This sequence belongs to the universal ribosomal protein uS14 family. As to quaternary structure, part of the 30S ribosomal subunit. Contacts proteins S3 and S10.

Its function is as follows. Binds 16S rRNA, required for the assembly of 30S particles and may also be responsible for determining the conformation of the 16S rRNA at the A site. The sequence is that of Small ribosomal subunit protein uS14 from Haemophilus influenzae (strain 86-028NP).